A 241-amino-acid polypeptide reads, in one-letter code: MIKLVNICYDYPDTCGLKDLSLTVNSGDFICLMGPNGSGKSTLLRLLSGLASPTSGAYQFHDQPITTTYLADAQNRQQLHQRIGMVFQNTDVQLFNTSVTEEVAFGPRQLGLSAAMVAQRVADCLQLTDCANLADRVPYQLSGGEKKRVALASVLALNPEILLLDEPLNGLTIAAQQQMLTLLQRLQAAGKTIIMASHNYQQVQAVGERFIIFNSTHQVDADLTRADLDQQPARQAQLMTL.

Residues 2 to 240 (IKLVNICYDY…QPARQAQLMT (239 aa)) enclose the ABC transporter domain. 34–41 (GPNGSGKS) serves as a coordination point for ATP.

It belongs to the ABC transporter superfamily. May form an energy-coupling factor (ECF) transporter complex composed of an ATP-binding protein (A component, LarO), a transmembrane protein (T component, LarQ) and a fused possible substrate-capture protein (S component, LarMN) of unknown stoichiometry.

The protein localises to the cell membrane. Probable ATP-binding component of the energy-coupling factor (ECF) transporter complex LarMNQO involved in nickel import. LarO is presumably responsible for energy coupling to the transport system. In Lactiplantibacillus plantarum (strain ATCC BAA-793 / NCIMB 8826 / WCFS1) (Lactobacillus plantarum), this protein is Nickel import ATP-binding protein LarO.